The chain runs to 31 residues: Photosystem II reaction center protein T (31 aa).

The helical transmembrane segment at 3–23 (ALVYTFLLIGTLGVIFFAIFF) threads the bilayer.

It belongs to the PsbT family. As to quaternary structure, PSII is composed of 1 copy each of membrane proteins PsbA, PsbB, PsbC, PsbD, PsbE, PsbF, PsbH, PsbI, PsbJ, PsbK, PsbL, PsbM, PsbT, PsbY, PsbZ, Psb30/Ycf12, at least 3 peripheral proteins of the oxygen-evolving complex and a large number of cofactors. It forms dimeric complexes.

The protein resides in the plastid. The protein localises to the chloroplast thylakoid membrane. Its function is as follows. Found at the monomer-monomer interface of the photosystem II (PS II) dimer, plays a role in assembly and dimerization of PSII. PSII is a light-driven water plastoquinone oxidoreductase, using light energy to abstract electrons from H(2)O, generating a proton gradient subsequently used for ATP formation. This is Photosystem II reaction center protein T from Euglena gracilis.